We begin with the raw amino-acid sequence, 502 residues long: Mitochondrial fusion and transport protein UGO1 (502 aa).

Met-1 is modified (N-acetylmethionine). At 1 to 293 the chain is on the cytoplasmic side; it reads MNNNNVTEAT…VINSPDISKS (293 aa). Residues 1-294 form a binds FZO1 region; sequence MNNNNVTEAT…INSPDISKSF (294 aa). The Solcar repeat unit spans residues 288–383; it reads PDISKSFILA…NSFFNKLFDL (96 aa). The helical; Signal-anchor for type II membrane protein transmembrane segment at 294-314 threads the bilayer; the sequence is FILALGAGVFTSIILLPVDLI. Residues 312–502 are binds MGM1; it reads DLIRTRLIVT…VDINMEQEKF (191 aa). Over 315-502 the chain is Mitochondrial intermembrane; that stretch reads RTRLIVTSFK…VDINMEQEKF (188 aa).

In terms of assembly, interacts with FZO1 through its cytoplasmic domain and with MGM1 through its mitochondrial intermembrane space domain.

Its subcellular location is the mitochondrion outer membrane. Functionally, required for mitochondrial fusion as well as normal mitochondrial morphology by bridging the essential interaction between FZO1 and MGM1. May coordinate fusion of inner and outer membranes during mitochondrial fusion. This chain is Mitochondrial fusion and transport protein UGO1, found in Saccharomyces cerevisiae (strain ATCC 204508 / S288c) (Baker's yeast).